Reading from the N-terminus, the 147-residue chain is Virion protein 4 (147 aa).

It is found in the virion. The chain is Virion protein 4 from Enterococcus faecalis (Streptococcus faecalis).